The sequence spans 94 residues: MTKSELIERLAGQHAHIQAKVVEDAVKEMLEHMATTLASGERIEIRGFGSFSLHYRAPRIGRNPKTGDRVELEGKYVPHFKPGKELRDRANIYG.

Belongs to the bacterial histone-like protein family. In terms of assembly, heterodimer of an alpha and a beta chain.

In terms of biological role, this protein is one of the two subunits of integration host factor, a specific DNA-binding protein that functions in genetic recombination as well as in transcriptional and translational control. The sequence is that of Integration host factor subunit beta from Sodalis glossinidius (strain morsitans).